We begin with the raw amino-acid sequence, 120 residues long: MATKSLSETALVAVIGDEDVVTGFLLAGVGQKDKKKNENFLVVDSKTSQAKIETAFKSFTTRNDIAIIMITQKVADEIRYLIDEYHQVIPTILEIPSKDHPYDPKKDSVMLKVKKMTGSD.

It belongs to the V-ATPase F subunit family. As to quaternary structure, V-ATPase is a heteromultimeric enzyme composed of a peripheral catalytic V1 complex (components A to H) attached to an integral membrane V0 proton pore complex (components: a, c, c', c'' and d).

Subunit of the peripheral V1 complex of vacuolar ATPase essential for assembly or catalytic function. V-ATPase is responsible for acidifying a variety of intracellular compartments in eukaryotic cells. This chain is V-type proton ATPase subunit F (vatF), found in Dictyostelium discoideum (Social amoeba).